Consider the following 368-residue polypeptide: Lipoyl synthase, chloroplastic (368 aa).

Disordered stretches follow at residues 1-30 (MQSS…RGSV) and 42-61 (PTVG…RDPE). Cys94, Cys99, Cys105, Cys131, Cys135, Cys138, and Ser346 together coordinate [4Fe-4S] cluster. Residues 114–335 (GEGDGIATAT…KEYGESVGFR (222 aa)) enclose the Radical SAM core domain.

The protein belongs to the radical SAM superfamily. Lipoyl synthase family. The cofactor is [4Fe-4S] cluster.

It is found in the plastid. The protein localises to the chloroplast. The enzyme catalyses [[Fe-S] cluster scaffold protein carrying a second [4Fe-4S](2+) cluster] + N(6)-octanoyl-L-lysyl-[protein] + 2 oxidized [2Fe-2S]-[ferredoxin] + 2 S-adenosyl-L-methionine + 4 H(+) = [[Fe-S] cluster scaffold protein] + N(6)-[(R)-dihydrolipoyl]-L-lysyl-[protein] + 4 Fe(3+) + 2 hydrogen sulfide + 2 5'-deoxyadenosine + 2 L-methionine + 2 reduced [2Fe-2S]-[ferredoxin]. It functions in the pathway protein modification; protein lipoylation via endogenous pathway; protein N(6)-(lipoyl)lysine from octanoyl-[acyl-carrier-protein]: step 2/2. In terms of biological role, catalyzes the radical-mediated insertion of two sulfur atoms into the C-6 and C-8 positions of the octanoyl moiety bound to the lipoyl domains of lipoate-dependent enzymes, thereby converting the octanoylated domains into lipoylated derivatives. This Sorghum bicolor (Sorghum) protein is Lipoyl synthase, chloroplastic.